A 179-amino-acid polypeptide reads, in one-letter code: UPF0227 protein Shewmr7_1806 (179 aa).

Belongs to the UPF0227 family.

The chain is UPF0227 protein Shewmr7_1806 from Shewanella sp. (strain MR-7).